We begin with the raw amino-acid sequence, 373 residues long: tRNA-specific 2-thiouridylase MnmA (373 aa).

Residues 12–19 (GMSGGVDS) and M38 contribute to the ATP site. Positions 98 to 100 (NPD) are interaction with target base in tRNA. C103 functions as the Nucleophile in the catalytic mechanism. An intrachain disulfide couples C103 to C200. Position 127 (G127) interacts with ATP. The segment at 150 to 152 (KDQ) is interaction with tRNA. C200 serves as the catalytic Cysteine persulfide intermediate. Residues 312–313 (RY) are interaction with tRNA.

It belongs to the MnmA/TRMU family.

It localises to the cytoplasm. The enzyme catalyses S-sulfanyl-L-cysteinyl-[protein] + uridine(34) in tRNA + AH2 + ATP = 2-thiouridine(34) in tRNA + L-cysteinyl-[protein] + A + AMP + diphosphate + H(+). Catalyzes the 2-thiolation of uridine at the wobble position (U34) of tRNA, leading to the formation of s(2)U34. The protein is tRNA-specific 2-thiouridylase MnmA of Streptococcus sanguinis (strain SK36).